An 804-amino-acid polypeptide reads, in one-letter code: Phenylalanine--tRNA ligase beta subunit (804 aa).

The 111-residue stretch at 38–148 (RSSLKGFVIA…EDAPIGGLFA (111 aa)) folds into the tRNA-binding domain. Residues 401–476 (PEIKQIAFPF…RIYGLDKIEP (76 aa)) enclose the B5 domain. Mg(2+) is bound by residues D454, D460, E463, and E464. Residues 710-803 (SPFQMVRRDF…VTKATGAYLR (94 aa)) form the FDX-ACB domain.

Belongs to the phenylalanyl-tRNA synthetase beta subunit family. Type 1 subfamily. Tetramer of two alpha and two beta subunits. Mg(2+) serves as cofactor.

It localises to the cytoplasm. It carries out the reaction tRNA(Phe) + L-phenylalanine + ATP = L-phenylalanyl-tRNA(Phe) + AMP + diphosphate + H(+). The chain is Phenylalanine--tRNA ligase beta subunit from Bartonella quintana (strain Toulouse) (Rochalimaea quintana).